The sequence spans 728 residues: Phosphoribosylformylglycinamidine synthase subunit PurL (728 aa).

The active site involves His42. 2 residues coordinate ATP: Tyr45 and Lys84. Position 86 (Glu86) interacts with Mg(2+). Residues 87–90 (SHNH) and Arg109 contribute to the substrate site. His88 acts as the Proton acceptor in catalysis. Residue Asp110 participates in Mg(2+) binding. Gln237 lines the substrate pocket. Residue Asp265 coordinates Mg(2+). 309-311 (ESQ) serves as a coordination point for substrate. The ATP site is built by Asp491 and Gly528. Asn529 lines the Mg(2+) pocket. Ser531 is a binding site for substrate.

This sequence belongs to the FGAMS family. As to quaternary structure, monomer. Part of the FGAM synthase complex composed of 1 PurL, 1 PurQ and 2 PurS subunits.

The protein resides in the cytoplasm. The catalysed reaction is N(2)-formyl-N(1)-(5-phospho-beta-D-ribosyl)glycinamide + L-glutamine + ATP + H2O = 2-formamido-N(1)-(5-O-phospho-beta-D-ribosyl)acetamidine + L-glutamate + ADP + phosphate + H(+). It participates in purine metabolism; IMP biosynthesis via de novo pathway; 5-amino-1-(5-phospho-D-ribosyl)imidazole from N(2)-formyl-N(1)-(5-phospho-D-ribosyl)glycinamide: step 1/2. Functionally, part of the phosphoribosylformylglycinamidine synthase complex involved in the purines biosynthetic pathway. Catalyzes the ATP-dependent conversion of formylglycinamide ribonucleotide (FGAR) and glutamine to yield formylglycinamidine ribonucleotide (FGAM) and glutamate. The FGAM synthase complex is composed of three subunits. PurQ produces an ammonia molecule by converting glutamine to glutamate. PurL transfers the ammonia molecule to FGAR to form FGAM in an ATP-dependent manner. PurS interacts with PurQ and PurL and is thought to assist in the transfer of the ammonia molecule from PurQ to PurL. In Campylobacter jejuni subsp. doylei (strain ATCC BAA-1458 / RM4099 / 269.97), this protein is Phosphoribosylformylglycinamidine synthase subunit PurL.